Here is a 159-residue protein sequence, read N- to C-terminus: Putative pre-16S rRNA nuclease (159 aa).

The protein belongs to the YqgF nuclease family.

The protein localises to the cytoplasm. Could be a nuclease involved in processing of the 5'-end of pre-16S rRNA. This Bartonella quintana (strain Toulouse) (Rochalimaea quintana) protein is Putative pre-16S rRNA nuclease.